We begin with the raw amino-acid sequence, 429 residues long: Glutamate-1-semialdehyde 2,1-aminomutase (429 aa).

Lys267 is subject to N6-(pyridoxal phosphate)lysine.

The protein belongs to the class-III pyridoxal-phosphate-dependent aminotransferase family. HemL subfamily. As to quaternary structure, homodimer. Requires pyridoxal 5'-phosphate as cofactor.

It is found in the cytoplasm. The catalysed reaction is (S)-4-amino-5-oxopentanoate = 5-aminolevulinate. It participates in porphyrin-containing compound metabolism; protoporphyrin-IX biosynthesis; 5-aminolevulinate from L-glutamyl-tRNA(Glu): step 2/2. The chain is Glutamate-1-semialdehyde 2,1-aminomutase from Xanthomonas oryzae pv. oryzae (strain PXO99A).